The chain runs to 186 residues: dITP/XTP pyrophosphatase (186 aa).

Residue 7–12 (TSNPGK) participates in substrate binding. The Mg(2+) site is built by E36 and D65. D65 acts as the Proton acceptor in catalysis. Substrate contacts are provided by residues S66, 140 to 143 (FGYD), K163, and 168 to 169 (HR).

Belongs to the HAM1 NTPase family. Homodimer. The cofactor is Mg(2+). Requires Mn(2+) as cofactor.

The enzyme catalyses XTP + H2O = XMP + diphosphate + H(+). It catalyses the reaction dITP + H2O = dIMP + diphosphate + H(+). It carries out the reaction ITP + H2O = IMP + diphosphate + H(+). Its function is as follows. Pyrophosphatase that catalyzes the hydrolysis of nucleoside triphosphates to their monophosphate derivatives, with a high preference for the non-canonical purine nucleotides XTP (xanthosine triphosphate), dITP (deoxyinosine triphosphate) and ITP. Seems to function as a house-cleaning enzyme that removes non-canonical purine nucleotides from the nucleotide pool, thus preventing their incorporation into DNA/RNA and avoiding chromosomal lesions. The chain is dITP/XTP pyrophosphatase from Pyrococcus horikoshii (strain ATCC 700860 / DSM 12428 / JCM 9974 / NBRC 100139 / OT-3).